We begin with the raw amino-acid sequence, 213 residues long: Ribonuclease HII (213 aa).

Positions 25–213 (KTLCGVDEAG…FKPVKQLLPH (189 aa)) constitute an RNase H type-2 domain. A divalent metal cation is bound by residues aspartate 31, glutamate 32, and aspartate 124.

The protein belongs to the RNase HII family. Requires Mn(2+) as cofactor. The cofactor is Mg(2+).

It localises to the cytoplasm. The enzyme catalyses Endonucleolytic cleavage to 5'-phosphomonoester.. Endonuclease that specifically degrades the RNA of RNA-DNA hybrids. This is Ribonuclease HII from Magnetococcus marinus (strain ATCC BAA-1437 / JCM 17883 / MC-1).